Reading from the N-terminus, the 329-residue chain is MCALKGFLEENFYTYSVAKGNHSTVYEFILLGLTDNAELQVTLFGIFLVVYLASFMGNFGLIMLIQISPQLHTPMYFFLSHLAFVDFSFTSSVAPNTLVNFLCEVKSITFYACAIQVCCFITFVVCELYLLSIMAYDRYVAICNPLLYVILIPRKLCIKLIASTYVYGFTVGLVQTVATSYLSFCDSNVINHFYHDDVPLVALACSDTHVKELMLLIIAGFNTLCSLVIVLISYGFIFFAILRIHSAEGRQKAFSTSASHLTSITIFYGTIIFMYPQPKSSHSLNMDKVASVFNVVVIPTLNPLIYSLRNQEVKNALKRIIEKLCLAVK.

Residues 1–44 are Extracellular-facing; the sequence is MCALKGFLEENFYTYSVAKGNHSTVYEFILLGLTDNAELQVTLF. An N-linked (GlcNAc...) asparagine glycan is attached at asparagine 21. The chain crosses the membrane as a helical span at residues 45–65; it reads GIFLVVYLASFMGNFGLIMLI. Topologically, residues 66–73 are cytoplasmic; that stretch reads QISPQLHT. Residues 74–94 traverse the membrane as a helical segment; it reads PMYFFLSHLAFVDFSFTSSVA. Over 95-113 the chain is Extracellular; sequence PNTLVNFLCEVKSITFYAC. An intrachain disulfide couples cysteine 113 to cysteine 205. Residues 114-134 traverse the membrane as a helical segment; that stretch reads AIQVCCFITFVVCELYLLSIM. At 135–157 the chain is on the cytoplasmic side; it reads AYDRYVAICNPLLYVILIPRKLC. The helical transmembrane segment at 158–178 threads the bilayer; it reads IKLIASTYVYGFTVGLVQTVA. Topologically, residues 179–220 are extracellular; the sequence is TSYLSFCDSNVINHFYHDDVPLVALACSDTHVKELMLLIIAG. A helical transmembrane segment spans residues 221 to 241; it reads FNTLCSLVIVLISYGFIFFAI. Residues 242-253 lie on the Cytoplasmic side of the membrane; the sequence is LRIHSAEGRQKA. A helical membrane pass occupies residues 254 to 274; the sequence is FSTSASHLTSITIFYGTIIFM. The Extracellular portion of the chain corresponds to 275-287; that stretch reads YPQPKSSHSLNMD. A helical transmembrane segment spans residues 288–308; that stretch reads KVASVFNVVVIPTLNPLIYSL. The Cytoplasmic portion of the chain corresponds to 309 to 329; the sequence is RNQEVKNALKRIIEKLCLAVK.

This sequence belongs to the G-protein coupled receptor 1 family.

It is found in the cell membrane. Functionally, odorant receptor. The chain is Olfactory receptor 5AL1 (OR5AL1) from Homo sapiens (Human).